A 450-amino-acid chain; its full sequence is C4-dicarboxylate transport protein (450 aa).

Helical transmembrane passes span 25 to 45, 56 to 76, 90 to 110, 162 to 182, 200 to 220, 234 to 254, 319 to 339, and 367 to 387; these read VVFA…YGAA, LIKM…IASM, MAYF…VANV, ILQV…VGDA, LVNI…AFTI, LVLT…GAVA, IYMT…LTLG, and AATL…ILGV.

This sequence belongs to the dicarboxylate/amino acid:cation symporter (DAACS) (TC 2.A.23) family.

Its subcellular location is the cell inner membrane. Its function is as follows. Responsible for the transport of dicarboxylates such as succinate, fumarate, and malate from the periplasm across the membrane. The protein is C4-dicarboxylate transport protein of Acidovorax sp. (strain JS42).